The chain runs to 401 residues: Probable N-acetyl-gamma-glutamyl-phosphate reductase, chloroplastic (401 aa).

The N-terminal 48 residues, 1-48, are a transit peptide targeting the chloroplast; the sequence is MSTASAFSSIQGCWFKGERKIRVADKRAKRLTLGSHVASPSSMSFRVS. Cys205 is an active-site residue.

The protein belongs to the NAGSA dehydrogenase family. Type 1 subfamily. As to quaternary structure, homotetramer.

It localises to the plastid. The protein localises to the chloroplast. The enzyme catalyses N-acetyl-L-glutamate 5-semialdehyde + phosphate + NADP(+) = N-acetyl-L-glutamyl 5-phosphate + NADPH + H(+). It functions in the pathway amino-acid biosynthesis; L-arginine biosynthesis; N(2)-acetyl-L-ornithine from L-glutamate: step 3/4. This chain is Probable N-acetyl-gamma-glutamyl-phosphate reductase, chloroplastic, found in Arabidopsis thaliana (Mouse-ear cress).